Consider the following 37-residue polypeptide: Large ribosomal subunit protein bL36 (37 aa).

This sequence belongs to the bacterial ribosomal protein bL36 family.

This is Large ribosomal subunit protein bL36 from Thermus thermophilus (strain ATCC BAA-163 / DSM 7039 / HB27).